Consider the following 23-residue polypeptide: Phospholipase A2 crotoxin basic chain 3 (23 aa).

The cofactor is Ca(2+). Contains 7 disulfide bonds. Expressed by the venom gland.

The protein localises to the secreted. It catalyses the reaction a 1,2-diacyl-sn-glycero-3-phosphocholine + H2O = a 1-acyl-sn-glycero-3-phosphocholine + a fatty acid + H(+). Functionally, snake venom phospholipase A2 (PLA2) that shows presynaptic neurotoxicity. PLA2 catalyzes the calcium-dependent hydrolysis of the 2-acyl groups in 3-sn-phosphoglycerides. The sequence is that of Phospholipase A2 crotoxin basic chain 3 from Crotalus durissus terrificus (South American rattlesnake).